The chain runs to 70 residues: Ubiquinol-cytochrome c reductase complex assembly factor 5 (70 aa).

The Mitochondrial matrix portion of the chain corresponds to M1–R19. The chain crosses the membrane as a helical span at residues F20 to I41. At K42–E70 the chain is on the mitochondrial intermembrane side.

This sequence belongs to the UQCC5 family. As to quaternary structure, associates with the mitochondrial ribosome. Interacts with UQCC6. Interacts with MT-CYB; interacts with newly synthesizes MT-CYB. Forms a complex, named COMB/coordinator of mitochondrial CYTB biogenesis, composed of UQCC1, UQCC2, UQCC4, UQCC5 and UQCC6; regulates MT-CYB synthesis and promotes its membrane insertion.

It localises to the mitochondrion inner membrane. Its function is as follows. Required for the assembly and stability of the mitochondrial ubiquinol-cytochrome c reductase complex (complex III (CIII) or cytochrome b-c1 complex), a multisubunit transmembrane complex that is part of the mitochondrial electron transport chain (ETC) which drives oxidative phosphorylation. Mediates early complex III biogenesis. Participates in regulating the levels of electron transport chain proteins, and therefore energy supply, in response to changes in energy demand. Also involved in the first steps of cytochrome c oxidase complex (complex IV) assembly. The chain is Ubiquinol-cytochrome c reductase complex assembly factor 5 from Homo sapiens (Human).